A 754-amino-acid chain; its full sequence is Cytosolic neutral trehalase (754 aa).

Polar residues predominate over residues methionine 1 to proline 10. Disordered stretches follow at residues methionine 1–asparagine 47 and threonine 54–proline 73. Positions 117, 119, 121, 123, and 128 each coordinate Ca(2+). Residues arginine 305, tryptophan 312–aspartate 313, asparagine 349, arginine 358–glutamine 360, glutamate 427, arginine 476, and glycine 479 contribute to the substrate site. Catalysis depends on proton donor/acceptor residues aspartate 481 and glutamate 676.

It belongs to the glycosyl hydrolase 37 family. It depends on Ca(2+) as a cofactor.

The protein resides in the cytoplasm. It catalyses the reaction alpha,alpha-trehalose + H2O = alpha-D-glucose + beta-D-glucose. Its pathway is carbohydrate degradation. Its function is as follows. Hydrolyzes intracellular trehalose to glucose. The disaccharide trehalose serves as a storage molecule for energy and carbohydrates that is mobilized during nutrient stress. The chain is Cytosolic neutral trehalase from Kluyveromyces lactis (strain ATCC 8585 / CBS 2359 / DSM 70799 / NBRC 1267 / NRRL Y-1140 / WM37) (Yeast).